We begin with the raw amino-acid sequence, 350 residues long: Meiotic driver wtf30 (350 aa).

A disordered region spans residues 1–92; it reads MKNKYYPLRS…RENHSSGTTD (92 aa). Over residues 11-29 the composition is skewed to basic and acidic residues; that stretch reads SIDELSTKNDNEIDLEKGP. The span at 57–72 shows a compositional bias: polar residues; it reads GANNPNLFNTDESTTP. Transmembrane regions (helical) follow at residues 97–117, 134–154, 165–185, 190–210, 226–246, 253–273, and 280–300; these read FLIK…PAVC, WVYF…LWCF, CVKV…IGLF, EMMI…FVYI, CTIS…FWTF, LAKV…TMFL, and WTGC…LFLC.

The protein belongs to the WTF family. Homomer. Forms protein aggregates. The two isoforms can interact with each other and with themselves. High sequence similarity is required for their interaction.

The protein resides in the spore membrane. The protein localises to the vacuole membrane. It localises to the ascus epiplasm. Its subcellular location is the cytoplasm. It is found in the endoplasmic reticulum membrane. Promotes unequal transmission of alleles from the parental zygote to progeny spores by acting as poison/antidote system where the poison and antidote proteins are produced from the same locus; the poison component is trans-acting and targets all spores within an ascus whereas the antidote component is spore-specific, leading to poisoning of all progeny that do not inherit the allele. Functionally, localizes isoform 2 to the vacuole thereby facilitating its degradation. In terms of biological role, forms toxic aggregates that disrupt spore maturation. The protein is Meiotic driver wtf30 of Schizosaccharomyces kambucha (Fission yeast).